Consider the following 459-residue polypeptide: Chromosomal replication initiator protein DnaA (459 aa).

A domain I, interacts with DnaA modulators region spans residues 1 to 74; the sequence is MQKIETFWYF…DEMAQGHFNE (74 aa). The interval 74–122 is domain II; the sequence is EKIHFKLELKDPAEIKTATIKAPEPKSKEDKKPPTDKAHGTTARKTNPS. The disordered stretch occupies residues 91–123; the sequence is ATIKAPEPKSKEDKKPPTDKAHGTTARKTNPSR. The segment covering 96–112 has biased composition (basic and acidic residues); the sequence is PEPKSKEDKKPPTDKAH. The interval 123–339 is domain III, AAA+ region; the sequence is RLNPAFTFDA…GALKRVLAYS (217 aa). The ATP site is built by glycine 167, glycine 169, lysine 170, and threonine 171. Residues 340 to 459 form a domain IV, binds dsDNA region; it reads RFTGHPISLD…YSTLIHILRG (120 aa).

It belongs to the DnaA family. As to quaternary structure, oligomerizes as a right-handed, spiral filament on DNA at oriC.

It localises to the cytoplasm. Functionally, plays an essential role in the initiation and regulation of chromosomal replication. ATP-DnaA binds to the origin of replication (oriC) to initiate formation of the DNA replication initiation complex once per cell cycle. Binds the DnaA box (a 9 base pair repeat at the origin) and separates the double-stranded (ds)DNA. Forms a right-handed helical filament on oriC DNA; dsDNA binds to the exterior of the filament while single-stranded (ss)DNA is stabiized in the filament's interior. The ATP-DnaA-oriC complex binds and stabilizes one strand of the AT-rich DNA unwinding element (DUE), permitting loading of DNA polymerase. After initiation quickly degrades to an ADP-DnaA complex that is not apt for DNA replication. Binds acidic phospholipids. In Nitrosomonas eutropha (strain DSM 101675 / C91 / Nm57), this protein is Chromosomal replication initiator protein DnaA.